A 941-amino-acid chain; its full sequence is Zinc finger protein 507 (941 aa).

Ser95 carries the post-translational modification Phosphoserine. 2 consecutive C2H2-type zinc fingers follow at residues 122–144 and 152–175; these read YQCSLCKFLSPSFSVLKEHVKQH and LMCSECHATSRSQQELEAHVVSEH. The span at 165–177 shows a compositional bias: basic and acidic residues; it reads QELEAHVVSEHEN. The segment at 165-198 is disordered; the sequence is QELEAHVVSEHENSASSQARSSPSGQGATERKSE. The span at 178–192 shows a compositional bias: low complexity; sequence SASSQARSSPSGQGA. A C2H2-type 3 zinc finger spans residues 237–259; sequence YRCLFCSYTCGQQRMLKTHAWKH. Phosphoserine is present on Ser415. The disordered stretch occupies residues 455 to 477; that stretch reads ELSKGLAPDENAPPGRRRTNSES. 5 C2H2-type zinc fingers span residues 630–652, 658–680, 686–709, 746–768, and 774–796; these read YRCRLCNYSSGNRGYIKQHLRVH, YQCPICEHIAENSKDLESHMINH, HQCKQCKESFHYKSQLRNHEREQH, YRCDVCDYTSTTYVGVRNHRRVH, and YRCSLCGYVCSHPPSLKSHMWKH. The tract at residues 823-856 is disordered; that stretch reads GKSRGKPLLTSSEERTGPTTGSPENLVSSSELTS. Residues 839 to 856 are compositionally biased toward polar residues; sequence GPTTGSPENLVSSSELTS. The segment at 899 to 921 adopts a C2H2-type 9 zinc-finger fold; it reads FCCCICGFESTSKESLLDHMKEH.

It belongs to the krueppel C2H2-type zinc-finger protein family.

Its subcellular location is the nucleus. May be involved in transcriptional regulation. This is Zinc finger protein 507 (Znf507) from Mus musculus (Mouse).